A 227-amino-acid polypeptide reads, in one-letter code: Phosphatidate cytidylyltransferase (227 aa).

Transmembrane regions (helical) follow at residues 31 to 51 (FVIAILWFKPLFYILMILVGM), 65 to 85 (IPYLLIGLIIIPIPISLLTFL), 93 to 113 (WLIMLYFCIIWSVDSFAMIGG), 131 to 151 (WSGLVTGVLSAGLVAVLASFI), 165 to 185 (IYLFIISCILALIAQSSDLFI), and 206 to 226 (GVLDRFDSIILTAPVLFFISI).

The protein belongs to the CDS family.

It localises to the cell membrane. It carries out the reaction a 1,2-diacyl-sn-glycero-3-phosphate + CTP + H(+) = a CDP-1,2-diacyl-sn-glycerol + diphosphate. The protein operates within phospholipid metabolism; CDP-diacylglycerol biosynthesis; CDP-diacylglycerol from sn-glycerol 3-phosphate: step 3/3. The chain is Phosphatidate cytidylyltransferase (cdsA) from Rickettsia felis (strain ATCC VR-1525 / URRWXCal2) (Rickettsia azadi).